A 497-amino-acid polypeptide reads, in one-letter code: Arabinose import ATP-binding protein AraG (497 aa).

2 ABC transporter domains span residues 6 to 242 and 250 to 497; these read LRFD…MVGR and FRPR…ALPA. ATP is bound at residue 38–45; it reads GENGAGKS.

This sequence belongs to the ABC transporter superfamily. Arabinose importer (TC 3.A.1.2.2) family. In terms of assembly, the complex is composed of two ATP-binding proteins (AraG), two transmembrane proteins (AraH) and a solute-binding protein (AraF).

The protein resides in the cell inner membrane. It carries out the reaction L-arabinose(out) + ATP + H2O = L-arabinose(in) + ADP + phosphate + H(+). In terms of biological role, part of the ABC transporter complex AraFGH involved in arabinose import. Responsible for energy coupling to the transport system. This chain is Arabinose import ATP-binding protein AraG, found in Chromohalobacter salexigens (strain ATCC BAA-138 / DSM 3043 / CIP 106854 / NCIMB 13768 / 1H11).